A 506-amino-acid polypeptide reads, in one-letter code: Beta-glucosidase 13 (506 aa).

Residues 1 to 25 form the signal peptide; sequence MAAAGEVVMLGGILLPLLLVVAVSG. Q49 provides a ligand contact to a beta-D-glucoside. A glycan (N-linked (GlcNAc...) asparagine) is linked at N118. A beta-D-glucoside contacts are provided by residues H153 and 198-199; that span reads NE. Residue E199 is the Proton donor of the active site. C219 and C226 are disulfide-bonded. N225 is a glycosylation site (N-linked (GlcNAc...) asparagine). Y342 contacts a beta-D-glucoside. Residues N357 and N367 are each glycosylated (N-linked (GlcNAc...) asparagine). A beta-D-glucoside is bound at residue E413. Catalysis depends on E413, which acts as the Nucleophile. A glycan (N-linked (GlcNAc...) asparagine) is linked at N421. A beta-D-glucoside is bound by residues W462, 469-470, and F478; that span reads EW.

This sequence belongs to the glycosyl hydrolase 1 family.

It carries out the reaction Hydrolysis of terminal, non-reducing beta-D-glucosyl residues with release of beta-D-glucose.. The protein is Beta-glucosidase 13 (BGLU13) of Oryza sativa subsp. japonica (Rice).